Here is a 391-residue protein sequence, read N- to C-terminus: 8-amino-7-oxononanoate synthase (391 aa).

Residue 108 to 109 (GF) coordinates pyridoxal 5'-phosphate. H133 contacts substrate. Positions 180, 208, and 236 each coordinate pyridoxal 5'-phosphate. K239 carries the post-translational modification N6-(pyridoxal phosphate)lysine. T353 contacts substrate.

This sequence belongs to the class-II pyridoxal-phosphate-dependent aminotransferase family. BioF subfamily. As to quaternary structure, homodimer. Pyridoxal 5'-phosphate serves as cofactor.

It carries out the reaction 6-carboxyhexanoyl-[ACP] + L-alanine + H(+) = (8S)-8-amino-7-oxononanoate + holo-[ACP] + CO2. Its pathway is cofactor biosynthesis; biotin biosynthesis. Its function is as follows. Catalyzes the decarboxylative condensation of pimeloyl-[acyl-carrier protein] and L-alanine to produce 8-amino-7-oxononanoate (AON), [acyl-carrier protein], and carbon dioxide. This chain is 8-amino-7-oxononanoate synthase, found in Thermosipho melanesiensis (strain DSM 12029 / CIP 104789 / BI429).